A 353-amino-acid chain; its full sequence is Terpene synthase 3 (353 aa).

The Mg(2+) site is built by D118, N261, and E269. Positions 118–122 (DDLLE) match the D(D/E)XX(D/E) motif motif. The short motif at 261–269 (NDTFLLKKE) is the NSE motif element. Residues 342–349 (WCSKTTRY) carry the WxxxxxRY motif motif.

This sequence belongs to the terpene synthase family. It depends on Mg(2+) as a cofactor.

Terpene synthase that may be involved in the production of volatile terpenoids. Does not show detectable terpene products with either farnesyl diphosphate (FPP) or geranyl diphosphate (GPP). P.polycephalum has a unique biology and these volatile terpenoids could function in internal communication of P.polycephalum, to mark the territory that have been explored, or they may be involved in chemotaxis. This chain is Terpene synthase 3, found in Physarum polycephalum (Slime mold).